Consider the following 124-residue polypeptide: Probable 5-hydroxyisourate hydrolase (124 aa).

3 residues coordinate substrate: His16, Arg57, and Tyr121.

The protein belongs to the transthyretin family. 5-hydroxyisourate hydrolase subfamily. As to quaternary structure, homotetramer.

The enzyme catalyses 5-hydroxyisourate + H2O = 5-hydroxy-2-oxo-4-ureido-2,5-dihydro-1H-imidazole-5-carboxylate + H(+). Functionally, catalyzes the hydrolysis of 5-hydroxyisourate (HIU) to 2-oxo-4-hydroxy-4-carboxy-5-ureidoimidazoline (OHCU). In Schizosaccharomyces pombe (strain 972 / ATCC 24843) (Fission yeast), this protein is Probable 5-hydroxyisourate hydrolase.